Consider the following 61-residue polypeptide: Large ribosomal subunit protein uL30 (61 aa).

It belongs to the universal ribosomal protein uL30 family. Part of the 50S ribosomal subunit.

In Lacticaseibacillus casei (strain BL23) (Lactobacillus casei), this protein is Large ribosomal subunit protein uL30.